The primary structure comprises 512 residues: L-aspartate oxidase (512 aa).

Residues 17–20 and 46–53 contribute to the FAD site; these read SGLA and SSAWAQGG. Residue arginine 278 is the Proton donor/acceptor of the active site. FAD contacts are provided by residues glutamate 361 and 377–378; that span reads SL.

It belongs to the FAD-dependent oxidoreductase 2 family. NadB subfamily. It depends on FAD as a cofactor.

It is found in the cytoplasm. The catalysed reaction is L-aspartate + O2 = iminosuccinate + H2O2. It functions in the pathway cofactor biosynthesis; NAD(+) biosynthesis; iminoaspartate from L-aspartate (oxidase route): step 1/1. In terms of biological role, catalyzes the oxidation of L-aspartate to iminoaspartate, the first step in the de novo biosynthesis of NAD(+). The protein is L-aspartate oxidase (nadB) of Xylella fastidiosa (strain Temecula1 / ATCC 700964).